The sequence spans 97 residues: Putative septation protein SpoVG (97 aa).

Belongs to the SpoVG family.

Its function is as follows. Could be involved in septation. This is Putative septation protein SpoVG from Borreliella burgdorferi (strain ATCC 35210 / DSM 4680 / CIP 102532 / B31) (Borrelia burgdorferi).